The primary structure comprises 553 residues: Zinc finger protein 324A (553 aa).

The 72-residue stretch at 1-72 folds into the KRAB domain; sequence MAFEDVAVYF…SGTDTTLSRT (72 aa). The Nuclear localization signal motif lies at 130–135; the sequence is PSRERK. A disordered region spans residues 186–221; the sequence is GRQPRTPERQKPCAQEVPGRTFGSAQDLEAAGGRGH. 9 C2H2-type zinc fingers span residues 257–279, 285–307, 313–335, 341–363, 369–391, 397–419, 425–447, 453–475, and 481–503; these read FECR…LRTH, YECA…QRIH, YACP…QRIH, FRCS…RKIH, YACA…ERTH, FVCA…QRVH, FACP…QLLH, FRCV…RRIH, and FVCT…QRIH. The interval 502-553 is disordered; sequence IHTGEKTVRRSRASLHPQARSVAGASSEGAPAKETEPTPASGPAAVSQPAEV.

This sequence belongs to the krueppel C2H2-type zinc-finger protein family. Expressed at high levels in the spleen, thymus, and PBMC, at low levels in the prostate, ovary, small intestine, colon (mucosal lining), placenta, lung, and pancreas, and very weakly expressed in the liver and kidney.

It localises to the nucleus. May be involved in transcriptional regulation. May be involved in regulation of cell proliferation. In Homo sapiens (Human), this protein is Zinc finger protein 324A (ZNF324).